The chain runs to 803 residues: Bifunctional enzyme MurC/Ddl (803 aa).

Residues 1–446 (MMKSLFYHFI…GEKLRDFEPQ (446 aa)) are UDP-N-acetylmuramate--alanine ligase. Residues 111-117 (GSHGKTT) and 600-655 (VEAF…CKEI) each bind ATP. The interval 447-803 (KLHLGIICGG…SFVDQAFAIQ (357 aa)) is D-alanine--D-alanine ligase. The region spanning 567-778 (KRFMSDLGIP…YEQIVHQLVI (212 aa)) is the ATP-grasp domain. The Mg(2+) site is built by aspartate 732, glutamate 745, and asparagine 747.

This sequence in the N-terminal section; belongs to the MurCDEF family. It in the C-terminal section; belongs to the D-alanine--D-alanine ligase family. Mg(2+) serves as cofactor. It depends on Mn(2+) as a cofactor.

The protein resides in the cytoplasm. The catalysed reaction is UDP-N-acetyl-alpha-D-muramate + L-alanine + ATP = UDP-N-acetyl-alpha-D-muramoyl-L-alanine + ADP + phosphate + H(+). It catalyses the reaction 2 D-alanine + ATP = D-alanyl-D-alanine + ADP + phosphate + H(+). It functions in the pathway cell wall biogenesis; peptidoglycan biosynthesis. In terms of biological role, cell wall formation. In Chlamydia trachomatis serovar D (strain ATCC VR-885 / DSM 19411 / UW-3/Cx), this protein is Bifunctional enzyme MurC/Ddl (murC/ddl).